Reading from the N-terminus, the 625-residue chain is Chaperone protein HtpG (625 aa).

Positions 1-337 are a; substrate-binding; that stretch reads MSTNQETRGF…TNDLPLNVSR (337 aa). Residues 338-554 are b; sequence EILQENKITA…NDEMTTQMAK (217 aa). The c stretch occupies residues 555 to 625; the sequence is LFAAMGQKAP…FIKRMNKLLG (71 aa).

It belongs to the heat shock protein 90 family. As to quaternary structure, homodimer.

The protein resides in the cytoplasm. Functionally, molecular chaperone. Has ATPase activity. The chain is Chaperone protein HtpG from Actinobacillus pleuropneumoniae serotype 5b (strain L20).